Reading from the N-terminus, the 29-residue chain is Potassium channel toxin alpha-KTx 20.1 (29 aa).

3 disulfides stabilise this stretch: C2-C20, C7-C24, and C11-C26.

Belongs to the short scorpion toxin superfamily. Potassium channel inhibitor family. Alpha-KTx 20 subfamily. In terms of tissue distribution, expressed by the venom gland.

It is found in the secreted. In terms of biological role, reduces potassium currents through Kv1.2/KCNA2 and Kv1.3/KCNA3 voltage-gated potassium channels. This is Potassium channel toxin alpha-KTx 20.1 from Tityus trivittatus (Argentinean scorpion).